The primary structure comprises 254 residues: DNA repair protein RecO (254 aa).

It belongs to the RecO family.

In terms of biological role, involved in DNA repair and RecF pathway recombination. This chain is DNA repair protein RecO, found in Gluconacetobacter diazotrophicus (strain ATCC 49037 / DSM 5601 / CCUG 37298 / CIP 103539 / LMG 7603 / PAl5).